The primary structure comprises 655 residues: Import motor subunit, mitochondrial (655 aa).

Residues 1–23 (MLAAKNILNRSSLSSSFRIATRL) constitute a mitochondrion transit peptide. Phosphothreonine is present on threonine 330. The tract at residues 629–655 (EQLYKNDSNNNNNNNNGNNAESDETKQ) is disordered. A compositionally biased stretch (low complexity) spans 637–647 (NNNNNNNNGNN).

This sequence belongs to the heat shock protein 70 family. In terms of assembly, component of the PAM complex, at least composed of SSC1 (mtHsp70), MGE1, TIM44, PAM16/TIM16, PAM17 and PAM18/TIM14. In the complex, SSC1 interacts directly with PAM18 and TIM44. Interacts with NAP1. Component of endonuclease SceI (endo.SceI), which is a heterodimer of ENS2 and SSC1.

The protein localises to the mitochondrion matrix. It carries out the reaction ATP + H2O = ADP + phosphate + H(+). Its function is as follows. Essential component of the PAM complex, a complex required for the translocation of transit peptide-containing proteins from the inner membrane into the mitochondrial matrix in an ATP-dependent manner. Constitutes the ATP-driven core of the motor and binds the precursor preprotein. Required for the import of the processed frataxin homolog YFH1 into the mitochondrion. Functionally, acts as a non-catalytic component of endonuclease SceI (endo.SceI), which cleaves specifically at multiple sites on mitochondrial DNA and produces double-stranded breaks. SSC1 confers broader sequence specificity, greater stability, and higher activity on the catalytic subunit. This chain is Import motor subunit, mitochondrial, found in Saccharomyces cerevisiae (Baker's yeast).